We begin with the raw amino-acid sequence, 185 residues long: Ribosome-recycling factor (185 aa).

Belongs to the RRF family.

Its subcellular location is the cytoplasm. In terms of biological role, responsible for the release of ribosomes from messenger RNA at the termination of protein biosynthesis. May increase the efficiency of translation by recycling ribosomes from one round of translation to another. The protein is Ribosome-recycling factor of Chloroflexus aurantiacus (strain ATCC 29364 / DSM 637 / Y-400-fl).